A 353-amino-acid chain; its full sequence is Photosystem II protein D1 (353 aa).

T2 bears the N-acetylthreonine mark. T2 carries the post-translational modification Phosphothreonine. The next 3 helical transmembrane spans lie at 29–46, 118–133, and 142–156; these read YIGW…TATS, HFLL…EWEL, and WIAV…AATA. Residue H118 coordinates chlorophyll a. A pheophytin a-binding site is contributed by Y126. Positions 170 and 189 each coordinate [CaMn4O5] cluster. The helical transmembrane segment at 197-218 threads the bilayer; the sequence is FHMLGVAGVFGGSLFSAMHGSL. H198 provides a ligand contact to chlorophyll a. A quinone is bound by residues H215 and 264–265; that span reads SF. H215 contributes to the Fe cation binding site. H272 contributes to the Fe cation binding site. Residues 274-288 traverse the membrane as a helical segment; it reads FLAAWPVVGIWFTAL. H332, E333, D342, and A344 together coordinate [CaMn4O5] cluster. The propeptide occupies 345–353; it reads AVEAPSTNG.

The protein belongs to the reaction center PufL/M/PsbA/D family. PSII is composed of 1 copy each of membrane proteins PsbA, PsbB, PsbC, PsbD, PsbE, PsbF, PsbH, PsbI, PsbJ, PsbK, PsbL, PsbM, PsbT, PsbX, PsbY, PsbZ, Psb30/Ycf12, at least 3 peripheral proteins of the oxygen-evolving complex and a large number of cofactors. It forms dimeric complexes. Requires The D1/D2 heterodimer binds P680, chlorophylls that are the primary electron donor of PSII, and subsequent electron acceptors. It shares a non-heme iron and each subunit binds pheophytin, quinone, additional chlorophylls, carotenoids and lipids. D1 provides most of the ligands for the Mn4-Ca-O5 cluster of the oxygen-evolving complex (OEC). There is also a Cl(-1) ion associated with D1 and D2, which is required for oxygen evolution. The PSII complex binds additional chlorophylls, carotenoids and specific lipids. as cofactor. In terms of processing, tyr-161 forms a radical intermediate that is referred to as redox-active TyrZ, YZ or Y-Z. C-terminally processed by CTPA; processing is essential to allow assembly of the oxygen-evolving complex and thus photosynthetic growth.

The protein resides in the plastid. The protein localises to the chloroplast thylakoid membrane. It catalyses the reaction 2 a plastoquinone + 4 hnu + 2 H2O = 2 a plastoquinol + O2. In terms of biological role, photosystem II (PSII) is a light-driven water:plastoquinone oxidoreductase that uses light energy to abstract electrons from H(2)O, generating O(2) and a proton gradient subsequently used for ATP formation. It consists of a core antenna complex that captures photons, and an electron transfer chain that converts photonic excitation into a charge separation. The D1/D2 (PsbA/PsbD) reaction center heterodimer binds P680, the primary electron donor of PSII as well as several subsequent electron acceptors. The polypeptide is Photosystem II protein D1 (Oenothera parviflora (Small-flowered evening primrose)).